The following is a 397-amino-acid chain: Elongation factor Tu (397 aa).

Residues 10-206 enclose the tr-type G domain; the sequence is KPHVNIGTIG…AVDDSIPEPQ (197 aa). The segment at 19-26 is G1; the sequence is GHIDHGKT. A GTP-binding site is contributed by 19–26; it reads GHIDHGKT. Thr26 provides a ligand contact to Mg(2+). A G2 region spans residues 62–66; that stretch reads GITIS. The segment at 83 to 86 is G3; sequence DCPG. Residues 83-87 and 138-141 contribute to the GTP site; these read DCPGH and NKAD. Residues 138–141 form a G4 region; the sequence is NKAD. The interval 176 to 178 is G5; that stretch reads SAL.

Belongs to the TRAFAC class translation factor GTPase superfamily. Classic translation factor GTPase family. EF-Tu/EF-1A subfamily. Monomer.

It localises to the cytoplasm. It catalyses the reaction GTP + H2O = GDP + phosphate + H(+). Its function is as follows. GTP hydrolase that promotes the GTP-dependent binding of aminoacyl-tRNA to the A-site of ribosomes during protein biosynthesis. The chain is Elongation factor Tu from Frankia alni (strain DSM 45986 / CECT 9034 / ACN14a).